The primary structure comprises 222 residues: Adenylate kinase (222 aa).

Residue Ser-2 is a propeptide, removed in mature form. N-acetylserine occurs at positions 2 and 3. 16 to 21 (GAGKGT) lines the ATP pocket. An NMP region spans residues 36–65 (ATGDMLRSQIAKGTQLGLEAKKIMDQGGLV). AMP-binding positions include Thr-37, Arg-42, 63–65 (GLV), 92–95 (GFPR), and Gln-99. The segment at 133–170 (GRLIHPASGRSYHKIFNPPKEDMKDDVTGEALVQRSDD) is LID. Residues Arg-134 and 143–144 (SY) each bind ATP. Residues Arg-167 and Arg-178 each contribute to the AMP site. Gln-206 provides a ligand contact to ATP.

It belongs to the adenylate kinase family. AK2 subfamily. As to quaternary structure, monomer.

It localises to the cytoplasm. The protein localises to the cytosol. The protein resides in the mitochondrion intermembrane space. It carries out the reaction AMP + ATP = 2 ADP. Its function is as follows. Catalyzes the reversible transfer of the terminal phosphate group between ATP and AMP. Plays an important role in cellular energy homeostasis and in adenine nucleotide metabolism. Adenylate kinase activity is critical for regulation of the phosphate utilization and the AMP de novo biosynthesis pathways. The protein is Adenylate kinase of Saccharomyces cerevisiae (strain RM11-1a) (Baker's yeast).